Here is a 177-residue protein sequence, read N- to C-terminus: NAD(P)H-quinone oxidoreductase subunit 6, chloroplastic (177 aa).

Helical transmembrane passes span 10-30, 32-52, 61-81, 92-112, and 152-172; these read FLLVFLGLGFIMGGLGVVLLT, PIFSAFSLGLVLVCTSLFYTP, AQLLIYVGAINVLIIFAVMFM, LWTVGDGVTSLVCTSIFVSLI, and FFLPFELISIILLVALIGAIS.

This sequence belongs to the complex I subunit 6 family. In terms of assembly, NDH is composed of at least 16 different subunits, 5 of which are encoded in the nucleus.

The protein resides in the plastid. It localises to the chloroplast thylakoid membrane. It carries out the reaction a plastoquinone + NADH + (n+1) H(+)(in) = a plastoquinol + NAD(+) + n H(+)(out). The catalysed reaction is a plastoquinone + NADPH + (n+1) H(+)(in) = a plastoquinol + NADP(+) + n H(+)(out). Functionally, NDH shuttles electrons from NAD(P)H:plastoquinone, via FMN and iron-sulfur (Fe-S) centers, to quinones in the photosynthetic chain and possibly in a chloroplast respiratory chain. The immediate electron acceptor for the enzyme in this species is believed to be plastoquinone. Couples the redox reaction to proton translocation, and thus conserves the redox energy in a proton gradient. The sequence is that of NAD(P)H-quinone oxidoreductase subunit 6, chloroplastic (ndhG) from Ranunculus macranthus (Large buttercup).